The sequence spans 255 residues: Cytochrome c oxidase subunit 3 (255 aa).

7 helical membrane passes run I12–L29, L57–I77, I91–F111, L126–I146, Y155–F175, F196–M216, and G235–L255.

Belongs to the cytochrome c oxidase subunit 3 family. As to quaternary structure, component of the cytochrome c oxidase (complex IV, CIV), a multisubunit enzyme composed of a catalytic core of 3 subunits and several supernumerary subunits. The complex exists as a monomer or a dimer and forms supercomplexes (SCs) in the inner mitochondrial membrane with ubiquinol-cytochrome c oxidoreductase (cytochrome b-c1 complex, complex III, CIII).

The protein resides in the mitochondrion inner membrane. The enzyme catalyses 4 Fe(II)-[cytochrome c] + O2 + 8 H(+)(in) = 4 Fe(III)-[cytochrome c] + 2 H2O + 4 H(+)(out). Its function is as follows. Component of the cytochrome c oxidase, the last enzyme in the mitochondrial electron transport chain which drives oxidative phosphorylation. The respiratory chain contains 3 multisubunit complexes succinate dehydrogenase (complex II, CII), ubiquinol-cytochrome c oxidoreductase (cytochrome b-c1 complex, complex III, CIII) and cytochrome c oxidase (complex IV, CIV), that cooperate to transfer electrons derived from NADH and succinate to molecular oxygen, creating an electrochemical gradient over the inner membrane that drives transmembrane transport and the ATP synthase. Cytochrome c oxidase is the component of the respiratory chain that catalyzes the reduction of oxygen to water. Electrons originating from reduced cytochrome c in the intermembrane space (IMS) are transferred via the dinuclear copper A center (CU(A)) of subunit 2 and heme A of subunit 1 to the active site in subunit 1, a binuclear center (BNC) formed by heme A3 and copper B (CU(B)). The BNC reduces molecular oxygen to 2 water molecules using 4 electrons from cytochrome c in the IMS and 4 protons from the mitochondrial matrix. The protein is Cytochrome c oxidase subunit 3 (MT-CO3) of Theileria annulata.